Reading from the N-terminus, the 401-residue chain is Argininosuccinate synthase (401 aa).

9–17 (AYSGGLDTS) contributes to the ATP binding site. Tyr-88 is an L-citrulline binding site. Gly-118 provides a ligand contact to ATP. L-aspartate-binding residues include Thr-120, Asn-124, and Asp-125. L-citrulline is bound at residue Asn-124. Positions 128, 176, 185, 261, and 273 each coordinate L-citrulline.

It belongs to the argininosuccinate synthase family. Type 1 subfamily. As to quaternary structure, homotetramer.

It is found in the cytoplasm. It catalyses the reaction L-citrulline + L-aspartate + ATP = 2-(N(omega)-L-arginino)succinate + AMP + diphosphate + H(+). The protein operates within amino-acid biosynthesis; L-arginine biosynthesis; L-arginine from L-ornithine and carbamoyl phosphate: step 2/3. The chain is Argininosuccinate synthase from Symbiobacterium thermophilum (strain DSM 24528 / JCM 14929 / IAM 14863 / T).